The sequence spans 173 residues: Rubredoxin-2 (173 aa).

Rubredoxin-like domains are found at residues 2 to 53 and 119 to 170; these read ASYK…FMLI and YLKW…YVLY. Fe cation is bound by residues Cys-6, Cys-9, Cys-39, Cys-42, Cys-124, Cys-127, Cys-157, and Cys-160.

The protein belongs to the rubredoxin family. The cofactor is Fe(3+).

It localises to the cytoplasm. Its pathway is hydrocarbon metabolism; alkane degradation. Involved in the hydrocarbon hydroxylating system, which transfers electrons from NADH to rubredoxin reductase and then through rubredoxin to alkane 1 monooxygenase. This chain is Rubredoxin-2 (alkG), found in Ectopseudomonas oleovorans (Pseudomonas oleovorans).